Here is a 245-residue protein sequence, read N- to C-terminus: 1-(5-phosphoribosyl)-5-[(5-phosphoribosylamino)methylideneamino] imidazole-4-carboxamide isomerase (245 aa).

Asp7 serves as the catalytic Proton acceptor. Asp129 acts as the Proton donor in catalysis.

It belongs to the HisA/HisF family.

Its subcellular location is the cytoplasm. The enzyme catalyses 1-(5-phospho-beta-D-ribosyl)-5-[(5-phospho-beta-D-ribosylamino)methylideneamino]imidazole-4-carboxamide = 5-[(5-phospho-1-deoxy-D-ribulos-1-ylimino)methylamino]-1-(5-phospho-beta-D-ribosyl)imidazole-4-carboxamide. It participates in amino-acid biosynthesis; L-histidine biosynthesis; L-histidine from 5-phospho-alpha-D-ribose 1-diphosphate: step 4/9. The polypeptide is 1-(5-phosphoribosyl)-5-[(5-phosphoribosylamino)methylideneamino] imidazole-4-carboxamide isomerase (Shewanella frigidimarina (strain NCIMB 400)).